The primary structure comprises 247 residues: Probable transcriptional regulatory protein PC1_1817 (247 aa).

The protein belongs to the TACO1 family.

Its subcellular location is the cytoplasm. The chain is Probable transcriptional regulatory protein PC1_1817 from Pectobacterium carotovorum subsp. carotovorum (strain PC1).